The chain runs to 431 residues: Adenylosuccinate synthetase (431 aa).

Residues 12–18 (GDEGKGK) and 40–42 (GHT) each bind GTP. The active-site Proton acceptor is Asp-13. Asp-13 and Gly-40 together coordinate Mg(2+). IMP contacts are provided by residues 13-16 (DEGK), 38-41 (NAGH), Thr-129, Arg-143, Gln-224, Thr-239, and Arg-303. His-41 functions as the Proton donor in the catalytic mechanism. Position 299–305 (299–305 (VTTGRAR)) interacts with substrate. GTP contacts are provided by residues Arg-305, 331 to 333 (KLD), and 413 to 415 (GVG).

Belongs to the adenylosuccinate synthetase family. Homodimer. The cofactor is Mg(2+).

The protein resides in the cytoplasm. It carries out the reaction IMP + L-aspartate + GTP = N(6)-(1,2-dicarboxyethyl)-AMP + GDP + phosphate + 2 H(+). The protein operates within purine metabolism; AMP biosynthesis via de novo pathway; AMP from IMP: step 1/2. In terms of biological role, plays an important role in the de novo pathway of purine nucleotide biosynthesis. Catalyzes the first committed step in the biosynthesis of AMP from IMP. The chain is Adenylosuccinate synthetase from Mycobacteroides abscessus (strain ATCC 19977 / DSM 44196 / CCUG 20993 / CIP 104536 / JCM 13569 / NCTC 13031 / TMC 1543 / L948) (Mycobacterium abscessus).